A 131-amino-acid chain; its full sequence is Proline-rich protein 3 (131 aa).

A disordered region spans residues Leu1–Lys77. Over residues Met12–Gly25 the composition is skewed to pro residues. Over residues Pro28–Trp44 the composition is skewed to gly residues. Residues Lys98 to Ala126 form a C3H1-type zinc finger.

The chain is Proline-rich protein 3 (PRR3) from Sus scrofa (Pig).